The primary structure comprises 201 residues: Probable thymidylate kinase (201 aa).

10-17 (GIDGSGKS) serves as a coordination point for ATP.

The protein belongs to the thymidylate kinase family.

The enzyme catalyses dTMP + ATP = dTDP + ADP. This chain is Probable thymidylate kinase, found in Methanococcoides burtonii (strain DSM 6242 / NBRC 107633 / OCM 468 / ACE-M).